Consider the following 526-residue polypeptide: Biotin carboxylase 2, chloroplastic (526 aa).

The transit peptide at 1–71 directs the protein to the chloroplast; that stretch reads MEATLPVCKS…GVTCRAEKIL (71 aa). Residues K181, 213-274, K223, 229-230, 265-268, and H273 each bind ATP; these read ASEI…PRHI, GG, and EKYV. The 198-residue stretch at 185–382 folds into the ATP-grasp domain; sequence RETMKKANVP…LIEEQIRVAM (198 aa). Hydrogencarbonate is bound at residue K302. ATP-binding residues include E340 and E353. Residues E340, E353, and N355 each contribute to the Mg(2+) site. Mn(2+) contacts are provided by E340, E353, and N355. Residues R357, V360, and R403 each coordinate hydrogencarbonate. The active site involves R357. R403 serves as a coordination point for biotin.

Acetyl-CoA carboxylase is a heterohexamer composed of biotin carboxyl carrier protein, biotin carboxylase and two subunits each of ACCase subunit alpha and ACCase plastid-coded subunit beta (accD). It depends on Mg(2+) as a cofactor. Mn(2+) is required as a cofactor.

It localises to the plastid. It is found in the chloroplast. It catalyses the reaction N(6)-biotinyl-L-lysyl-[protein] + hydrogencarbonate + ATP = N(6)-carboxybiotinyl-L-lysyl-[protein] + ADP + phosphate + H(+). It participates in lipid metabolism; malonyl-CoA biosynthesis; malonyl-CoA from acetyl-CoA: step 1/1. In terms of biological role, this protein is a component of the acetyl coenzyme A carboxylase complex; first, biotin carboxylase catalyzes the carboxylation of the carrier protein and then the transcarboxylase transfers the carboxyl group to form malonyl-CoA. The sequence is that of Biotin carboxylase 2, chloroplastic from Populus trichocarpa (Western balsam poplar).